The chain runs to 76 residues: DNA-directed RNA polymerase subunit omega (76 aa).

This sequence belongs to the RNA polymerase subunit omega family. As to quaternary structure, in cyanobacteria the RNAP catalytic core is composed of 2 alpha, 1 beta, 1 beta', 1 gamma and 1 omega subunit. When a sigma factor is associated with the core the holoenzyme is formed, which can initiate transcription.

It carries out the reaction RNA(n) + a ribonucleoside 5'-triphosphate = RNA(n+1) + diphosphate. Its function is as follows. Promotes RNA polymerase assembly. Latches the N- and C-terminal regions of the beta' subunit thereby facilitating its interaction with the beta and alpha subunits. The chain is DNA-directed RNA polymerase subunit omega from Acaryochloris marina (strain MBIC 11017).